The sequence spans 164 residues: Phosphopantetheine adenylyltransferase (164 aa).

A substrate-binding site is contributed by Ser10. Residues 10–11 (SF) and His18 each bind ATP. Residues Lys42, Leu74, and Arg88 each coordinate substrate. Residues 89-91 (GLR), Glu99, and 124-130 (YSFLSSS) contribute to the ATP site.

The protein belongs to the bacterial CoaD family. In terms of assembly, homohexamer. It depends on Mg(2+) as a cofactor.

Its subcellular location is the cytoplasm. The enzyme catalyses (R)-4'-phosphopantetheine + ATP + H(+) = 3'-dephospho-CoA + diphosphate. Its pathway is cofactor biosynthesis; coenzyme A biosynthesis; CoA from (R)-pantothenate: step 4/5. Its function is as follows. Reversibly transfers an adenylyl group from ATP to 4'-phosphopantetheine, yielding dephospho-CoA (dPCoA) and pyrophosphate. This Bacillus licheniformis (strain ATCC 14580 / DSM 13 / JCM 2505 / CCUG 7422 / NBRC 12200 / NCIMB 9375 / NCTC 10341 / NRRL NRS-1264 / Gibson 46) protein is Phosphopantetheine adenylyltransferase.